The sequence spans 341 residues: Putative UPF0607 protein ENSP00000381514 (341 aa).

Residues 78–89 show a composition bias toward basic and acidic residues; that stretch reads AEEPKEATEVKD. Disordered regions lie at residues 78–131 and 216–282; these read AEEP…NPRP and GLLT…KLPC. The segment covering 108–127 has biased composition (polar residues); that stretch reads EAASTSRPLETQGNLTSSWY. Basic residues predominate over residues 243–252; that stretch reads AGHRSRKRKL.

This sequence belongs to the UPF0607 family.

This chain is Putative UPF0607 protein ENSP00000381514, found in Homo sapiens (Human).